We begin with the raw amino-acid sequence, 560 residues long: Probable methionine--tRNA ligase, cytoplasmic (560 aa).

A 'HIGH' region motif is present at residues 16-26; it reads PYVNNQPHLGN. Positions 347–351 match the 'KMSKS' region motif; that stretch reads KFSKS. Lys-350 lines the ATP pocket.

It belongs to the class-I aminoacyl-tRNA synthetase family.

Its subcellular location is the cytoplasm. The catalysed reaction is tRNA(Met) + L-methionine + ATP = L-methionyl-tRNA(Met) + AMP + diphosphate. This is Probable methionine--tRNA ligase, cytoplasmic from Vairimorpha ceranae (strain BRL01) (Microsporidian parasite).